The sequence spans 384 residues: Dual-specificity RNA methyltransferase RlmN (384 aa).

The active-site Proton acceptor is glutamate 105. Residues 111–350 (EDDRATLCVS…TIVRKTRGDD (240 aa)) enclose the Radical SAM core domain. Cysteine 118 and cysteine 355 are oxidised to a cystine. Positions 125, 129, and 132 each coordinate [4Fe-4S] cluster. S-adenosyl-L-methionine-binding positions include 179 to 180 (GE), serine 211, 233 to 235 (SLH), and asparagine 312. Catalysis depends on cysteine 355, which acts as the S-methylcysteine intermediate.

Belongs to the radical SAM superfamily. RlmN family. It depends on [4Fe-4S] cluster as a cofactor.

It localises to the cytoplasm. It catalyses the reaction adenosine(2503) in 23S rRNA + 2 reduced [2Fe-2S]-[ferredoxin] + 2 S-adenosyl-L-methionine = 2-methyladenosine(2503) in 23S rRNA + 5'-deoxyadenosine + L-methionine + 2 oxidized [2Fe-2S]-[ferredoxin] + S-adenosyl-L-homocysteine. The catalysed reaction is adenosine(37) in tRNA + 2 reduced [2Fe-2S]-[ferredoxin] + 2 S-adenosyl-L-methionine = 2-methyladenosine(37) in tRNA + 5'-deoxyadenosine + L-methionine + 2 oxidized [2Fe-2S]-[ferredoxin] + S-adenosyl-L-homocysteine. In terms of biological role, specifically methylates position 2 of adenine 2503 in 23S rRNA and position 2 of adenine 37 in tRNAs. m2A2503 modification seems to play a crucial role in the proofreading step occurring at the peptidyl transferase center and thus would serve to optimize ribosomal fidelity. This is Dual-specificity RNA methyltransferase RlmN from Escherichia coli O6:H1 (strain CFT073 / ATCC 700928 / UPEC).